A 343-amino-acid chain; its full sequence is Signal peptide peptidase 2 (343 aa).

Residues 1–19 are Lumenal-facing; the sequence is MKTHERAANLALAGLSLAP. A helical membrane pass occupies residues 20 to 40; the sequence is LVVKVNPNANVILTACLAVYV. Topologically, residues 41–62 are cytoplasmic; the sequence is GCYRSVKPTPPAETMSKEHAMR. A helical membrane pass occupies residues 63-83; it reads FPLVGSAMLLSLFLLFKFLSK. The Lumenal segment spans residues 84-89; sequence DLVNTV. Residues 90-110 form a helical membrane-spanning segment; the sequence is LTAYFFILGIAALCATLLPSI. Residues 111-141 are Cytoplasmic-facing; it reads KRFLPKEWNDNAIVWRAPLFHSLSVEFTRSQ. The helical transmembrane segment at 142 to 162 threads the bilayer; it reads VVASIPGFFFCIWYAAKKHWL. At 163–165 the chain is on the lumenal side; that stretch reads ANN. The helical transmembrane segment at 166-186 threads the bilayer; sequence VLGISFCIQGIEMLSLGSFKT. At 187 to 188 the chain is on the cytoplasmic side; that stretch reads GA. The chain crosses the membrane as a helical span at residues 189–209; that stretch reads ILLSGLFFYDIFWVFFTPVMV. Asp198 is a catalytic residue. Residues 210 to 230 are Lumenal-facing; the sequence is SVAKSFDAPIKLLFPTGDAAR. A helical membrane pass occupies residues 231–251; it reads PFSMLGLGDIVIPGIFVALAL. Residue Asp239 is part of the active site. Residues 252–266 are Cytoplasmic-facing; sequence RFDVSRGIKNRYFNS. Residues 267-287 traverse the membrane as a helical segment; the sequence is AFLGYTVGLTVTIIVMNWFQA. Topologically, residues 288-290 are lumenal; sequence AQP. The PAL signature appears at 290–292; that stretch reads PAL. The helical transmembrane segment at 291–311 threads the bilayer; the sequence is ALLYIVPGVIGFVAVHCLWNG. At 312–343 the chain is on the cytoplasmic side; it reads EVKPLLEYNESKAEEEEACEEDTDSKQNKKKE. Positions 324–334 are enriched in acidic residues; that stretch reads AEEEEACEEDT. The segment at 324–343 is disordered; sequence AEEEEACEEDTDSKQNKKKE. Residues 340–343 carry the Endoplasmic reticulum targeting signal motif; the sequence is KKKE.

Belongs to the peptidase A22B family. Ubiquitous.

It localises to the endoplasmic reticulum membrane. Functionally, intramembrane-cleaving aspartic protease (I-CLiP) that cleaves type II membrane signal peptides in the hydrophobic plane of the membrane. Catalyzes intramembrane proteolysis of some signal peptides after they have been cleaved from a preprotein, resulting in the release of the fragment from the ER membrane into the cytoplasm. The chain is Signal peptide peptidase 2 (SPP2) from Oryza sativa subsp. japonica (Rice).